A 318-amino-acid polypeptide reads, in one-letter code: Malate dehydrogenase (318 aa).

NAD(+) contacts are provided by residues 11–17 (GAGGNVG) and aspartate 37. Residues arginine 86 and arginine 92 each contribute to the substrate site. NAD(+)-binding positions include asparagine 99 and 122-124 (VTN). Substrate-binding residues include asparagine 124 and arginine 155. The active-site Proton acceptor is the histidine 179.

It belongs to the LDH/MDH superfamily. MDH type 3 family.

It catalyses the reaction (S)-malate + NAD(+) = oxaloacetate + NADH + H(+). Functionally, catalyzes the reversible oxidation of malate to oxaloacetate. The polypeptide is Malate dehydrogenase (Nitratiruptor sp. (strain SB155-2)).